The chain runs to 436 residues: Bifunctional protein GlmU (436 aa).

The segment at 1 to 225 (MNNNTSIIIL…EQNFMGINDK (225 aa)) is pyrophosphorylase. UDP-N-acetyl-alpha-D-glucosamine contacts are provided by residues 10–13 (LAAG), Lys24, Gln76, and 83–84 (GT). Asp104 contacts Mg(2+). Positions 137, 151, 166, and 223 each coordinate UDP-N-acetyl-alpha-D-glucosamine. Asn223 serves as a coordination point for Mg(2+). Positions 226–246 (FQLSIAEKIMQDEIKQNLMKA) are linker. Positions 247–436 (GVLMRMPESI…KFFGKDDVKK (190 aa)) are N-acetyltransferase. 2 residues coordinate UDP-N-acetyl-alpha-D-glucosamine: Arg310 and Lys327. His338 (proton acceptor) is an active-site residue. The UDP-N-acetyl-alpha-D-glucosamine site is built by Tyr341 and Asn352. Acetyl-CoA contacts are provided by residues 361–362 (NY), Ser380, Ala398, and Arg415.

In the N-terminal section; belongs to the N-acetylglucosamine-1-phosphate uridyltransferase family. It in the C-terminal section; belongs to the transferase hexapeptide repeat family. As to quaternary structure, homotrimer. Mg(2+) is required as a cofactor.

It localises to the cytoplasm. The enzyme catalyses alpha-D-glucosamine 1-phosphate + acetyl-CoA = N-acetyl-alpha-D-glucosamine 1-phosphate + CoA + H(+). It carries out the reaction N-acetyl-alpha-D-glucosamine 1-phosphate + UTP + H(+) = UDP-N-acetyl-alpha-D-glucosamine + diphosphate. The protein operates within nucleotide-sugar biosynthesis; UDP-N-acetyl-alpha-D-glucosamine biosynthesis; N-acetyl-alpha-D-glucosamine 1-phosphate from alpha-D-glucosamine 6-phosphate (route II): step 2/2. Its pathway is nucleotide-sugar biosynthesis; UDP-N-acetyl-alpha-D-glucosamine biosynthesis; UDP-N-acetyl-alpha-D-glucosamine from N-acetyl-alpha-D-glucosamine 1-phosphate: step 1/1. It functions in the pathway bacterial outer membrane biogenesis; LPS lipid A biosynthesis. Functionally, catalyzes the last two sequential reactions in the de novo biosynthetic pathway for UDP-N-acetylglucosamine (UDP-GlcNAc). The C-terminal domain catalyzes the transfer of acetyl group from acetyl coenzyme A to glucosamine-1-phosphate (GlcN-1-P) to produce N-acetylglucosamine-1-phosphate (GlcNAc-1-P), which is converted into UDP-GlcNAc by the transfer of uridine 5-monophosphate (from uridine 5-triphosphate), a reaction catalyzed by the N-terminal domain. The polypeptide is Bifunctional protein GlmU (Campylobacter concisus (strain 13826)).